The sequence spans 207 residues: Ribosomal RNA large subunit methyltransferase E (207 aa).

S-adenosyl-L-methionine is bound by residues Gly-60, Trp-62, Asp-80, Asp-96, and Asp-121. The active-site Proton acceptor is Lys-161.

The protein belongs to the class I-like SAM-binding methyltransferase superfamily. RNA methyltransferase RlmE family.

It is found in the cytoplasm. It carries out the reaction uridine(2552) in 23S rRNA + S-adenosyl-L-methionine = 2'-O-methyluridine(2552) in 23S rRNA + S-adenosyl-L-homocysteine + H(+). Its function is as follows. Specifically methylates the uridine in position 2552 of 23S rRNA at the 2'-O position of the ribose in the fully assembled 50S ribosomal subunit. This Thioalkalivibrio sulfidiphilus (strain HL-EbGR7) protein is Ribosomal RNA large subunit methyltransferase E.